A 129-amino-acid chain; its full sequence is Sulfurtransferase TusD (129 aa).

Catalysis depends on Cys79, which acts as the Cysteine persulfide intermediate.

It belongs to the DsrE/TusD family. Heterohexamer, formed by a dimer of trimers. The hexameric TusBCD complex contains 2 copies each of TusB, TusC and TusD. The TusBCD complex interacts with TusE.

Its subcellular location is the cytoplasm. Its function is as follows. Part of a sulfur-relay system required for 2-thiolation of 5-methylaminomethyl-2-thiouridine (mnm(5)s(2)U) at tRNA wobble positions. Accepts sulfur from TusA and transfers it in turn to TusE. The chain is Sulfurtransferase TusD from Serratia proteamaculans (strain 568).